The primary structure comprises 408 residues: Peptidase T (408 aa).

His78 serves as a coordination point for Zn(2+). Asp80 is an active-site residue. Zn(2+) is bound at residue Asp140. The Proton acceptor role is filled by Glu174. Glu175, Asp197, and His379 together coordinate Zn(2+).

The protein belongs to the peptidase M20B family. Zn(2+) is required as a cofactor.

The protein resides in the cytoplasm. It carries out the reaction Release of the N-terminal residue from a tripeptide.. Its function is as follows. Cleaves the N-terminal amino acid of tripeptides. This is Peptidase T from Staphylococcus aureus (strain bovine RF122 / ET3-1).